The chain runs to 59 residues: UPF0391 membrane protein GbCGDNIH1_2123 (59 aa).

2 consecutive transmembrane segments (helical) span residues 6–26 (LALFFLVVSLIAGLFGFTGIS) and 35–55 (ILFVIFLIVFVVLLVMALAAG).

The protein belongs to the UPF0391 family.

The protein localises to the cell membrane. The protein is UPF0391 membrane protein GbCGDNIH1_2123 of Granulibacter bethesdensis (strain ATCC BAA-1260 / CGDNIH1).